We begin with the raw amino-acid sequence, 124 residues long: Large ribosomal subunit protein uL18 (124 aa).

The protein belongs to the universal ribosomal protein uL18 family. As to quaternary structure, part of the 50S ribosomal subunit; part of the 5S rRNA/L5/L18/L25 subcomplex. Contacts the 5S and 23S rRNAs.

Its function is as follows. This is one of the proteins that bind and probably mediate the attachment of the 5S RNA into the large ribosomal subunit, where it forms part of the central protuberance. This is Large ribosomal subunit protein uL18 from Frankia casuarinae (strain DSM 45818 / CECT 9043 / HFP020203 / CcI3).